Reading from the N-terminus, the 455-residue chain is Chromosomal replication initiator protein DnaA (455 aa).

Positions 1–74 (MSEQEIWEKV…LYEAIGHEIA (74 aa)) are domain I, interacts with DnaA modulators. Residues 74-116 (APVFYTEEELKSLHTSEQKEENQPEQPAKKYTPGVDEAVIGGE) are domain II. Positions 85–95 (SLHTSEQKEEN) are enriched in basic and acidic residues. Positions 85-104 (SLHTSEQKEENQPEQPAKKY) are disordered. Residues 117 to 333 (QFNTHNTFET…GALTRVLAFS (217 aa)) are domain III, AAA+ region. ATP contacts are provided by G161, G163, K164, and T165. The interval 334 to 455 (KLQGQPITTE…ENLEKEIRNQ (122 aa)) is domain IV, binds dsDNA.

This sequence belongs to the DnaA family. In terms of assembly, oligomerizes as a right-handed, spiral filament on DNA at oriC.

Its subcellular location is the cytoplasm. Plays an essential role in the initiation and regulation of chromosomal replication. ATP-DnaA binds to the origin of replication (oriC) to initiate formation of the DNA replication initiation complex once per cell cycle. Binds the DnaA box (a 9 base pair repeat at the origin) and separates the double-stranded (ds)DNA. Forms a right-handed helical filament on oriC DNA; dsDNA binds to the exterior of the filament while single-stranded (ss)DNA is stabiized in the filament's interior. The ATP-DnaA-oriC complex binds and stabilizes one strand of the AT-rich DNA unwinding element (DUE), permitting loading of DNA polymerase. After initiation quickly degrades to an ADP-DnaA complex that is not apt for DNA replication. Binds acidic phospholipids. The sequence is that of Chromosomal replication initiator protein DnaA from Staphylococcus saprophyticus subsp. saprophyticus (strain ATCC 15305 / DSM 20229 / NCIMB 8711 / NCTC 7292 / S-41).